The following is a 288-amino-acid chain: MAEKKQWHETLHDQFGQYFAVDNVLYHEKTDHQDLIIFENAAFGRVMALDGVVQTTERDEFIYHEMMTHVPLLAHGHAKHVLIIGGGDGAMLREVTRHKNVESITMVEIDAGVVSFCRQYLPNHNAGSYDDPRFKLVIDDGVNFVNQTSQTFDVIISDCTDPIGPGESLFTSAFYEGCKRCLNPSGIFVAQNGVCFLQQEEAIDSHRKLSHYFSDVGFYQTAIPTYYGGIMTFAWATDNDALRHLSTEIIQARFLASGLKCRYYNPAIHTAAFALPQYLQDALASQPS.

The PABS domain occupies 9–238 (ETLHDQFGQY…GIMTFAWATD (230 aa)). Glutamine 33 provides a ligand contact to S-methyl-5'-thioadenosine. Residues histidine 64 and aspartate 88 each contribute to the spermidine site. S-methyl-5'-thioadenosine-binding positions include glutamate 108 and 140–141 (DG). Aspartate 158 (proton acceptor) is an active-site residue. 158–161 (DCTD) serves as a coordination point for spermidine. Proline 165 is a binding site for S-methyl-5'-thioadenosine.

Belongs to the spermidine/spermine synthase family. In terms of assembly, homodimer or homotetramer.

Its subcellular location is the cytoplasm. The catalysed reaction is S-adenosyl 3-(methylsulfanyl)propylamine + putrescine = S-methyl-5'-thioadenosine + spermidine + H(+). It participates in amine and polyamine biosynthesis; spermidine biosynthesis; spermidine from putrescine: step 1/1. Catalyzes the irreversible transfer of a propylamine group from the amino donor S-adenosylmethioninamine (decarboxy-AdoMet) to putrescine (1,4-diaminobutane) to yield spermidine. This Shigella boydii serotype 18 (strain CDC 3083-94 / BS512) protein is Polyamine aminopropyltransferase.